A 221-amino-acid polypeptide reads, in one-letter code: SIN3-HDAC complex-associated factor (221 aa).

A compositionally biased stretch (basic and acidic residues) spans 112–121; it reads QKEFKRHNSD. 2 disordered regions span residues 112 to 152 and 201 to 221; these read QKEF…MASG and AAAEKPEEQGPEPLPISTQEW. Positions 124–135 are enriched in low complexity; sequence STTSSASPAQSP. Residues 136–152 show a composition bias toward polar residues; sequence CYSNQSDDGSDTEMASG.

It belongs to the SINHCAF family. In terms of assembly, interacts with the Sin3/HDAC corepressor complex at least composed of BRMS1, BRMS1L, ING2, SAP30, SAP30L and HDAC1. Found in a complex composed of at least SINHCAF, SIN3A, HDAC1, SAP30, RBBP4, OGT and TET1. Interacts with SIN3A and OGT.

The protein resides in the nucleus. Subunit of the Sin3 deacetylase complex (Sin3/HDAC), this subunit is important for the repression of genes encoding components of the TGF-beta signaling pathway. Core component of a SIN3A complex (composed of at least SINHCAF, SIN3A, HDAC1, SAP30, RBBP4, OGT and TET1) present in embryonic stem (ES) cells. Promotes the stability of SIN3A and its presence on chromatin and is essential for maintaining the potential of ES cells to proliferate rapidly, while ensuring a short G1-phase of the cell cycle, thereby preventing premature lineage priming. This chain is SIN3-HDAC complex-associated factor, found in Homo sapiens (Human).